Consider the following 248-residue polypeptide: Protein LIFEGUARD 3 (248 aa).

7 helical membrane passes run 42–62 (VYSI…TVVT), 74–94 (GLGL…LCPL), 105–125 (YLLL…TCAF), 130–150 (VILE…LYTF), 165–185 (FLFG…LFPL), 188–208 (VSVM…IVYD), and 222–242 (IWAA…LLTV).

This sequence belongs to the BI1 family.

It is found in the membrane. The polypeptide is Protein LIFEGUARD 3 (Arabidopsis thaliana (Mouse-ear cress)).